A 361-amino-acid chain; its full sequence is MLNIGIFFGSKSVEHEISIITAQQVLSSIDRKKYNVIPIYISKSGEWFTGKVLEDLETFKDFDKLEKKAKKIDSFSVKNNKLLLKYGLKKQTIDFCFLVFHGTNGEDGTFQGMCEIFGIPYSGCNHFSSAFTMDKVVTKLLLKEKEISVVDFEYTTEINEEFFKRCEKNLGYPMIVKPARLGSSIGVSKVVDRKNFEEAVKNVLLFDNKVLVEKWINAREINCAVMGYKNIFVSELEEINKKNDFFNFEEKYFKKGKKFSNHIIPARIDENLKNKIKEIAKDTFKILECSGNVRIDFLIADKIYVNEINTIPGALSFYIWQKSGFTFSQIIDNMINMGLERFKDKKIVSIDTNILKIKVGK.

Residues 139 to 336 enclose the ATP-grasp domain; the sequence is KLLLKEKEIS…FSQIIDNMIN (198 aa). 167–222 serves as a coordination point for ATP; that stretch reads EKNLGYPMIVKPARLGSSIGVSKVVDRKNFEEAVKNVLLFDNKVLVEKWINAREIN. 3 residues coordinate Mg(2+): Asp-296, Glu-307, and Asn-309.

Belongs to the D-alanine--D-alanine ligase family. Mg(2+) serves as cofactor. The cofactor is Mn(2+).

The protein resides in the cytoplasm. It catalyses the reaction 2 D-alanine + ATP = D-alanyl-D-alanine + ADP + phosphate + H(+). The protein operates within cell wall biogenesis; peptidoglycan biosynthesis. Functionally, cell wall formation. The sequence is that of D-alanine--D-alanine ligase from Thermosipho melanesiensis (strain DSM 12029 / CIP 104789 / BI429).